Here is a 261-residue protein sequence, read N- to C-terminus: Small ribosomal subunit protein mS23 (261 aa).

The interval 234–261 (NPSESWATDEKDPKKNDDIEEDVEEIKL) is disordered. A compositionally biased stretch (basic and acidic residues) spans 241–250 (TDEKDPKKND). Residues 251 to 261 (DIEEDVEEIKL) are compositionally biased toward acidic residues.

The protein belongs to the mitochondrion-specific ribosomal protein mS23 family. In terms of assembly, component of the mitochondrial small ribosomal subunit.

The protein localises to the mitochondrion. This is Small ribosomal subunit protein mS23 (RSM25) from Vanderwaltozyma polyspora (strain ATCC 22028 / DSM 70294 / BCRC 21397 / CBS 2163 / NBRC 10782 / NRRL Y-8283 / UCD 57-17) (Kluyveromyces polysporus).